The chain runs to 294 residues: MNTTALLIGLGPLLGWGLYPTIASKIGGRPVNQILGSTIGTLIFALIYAWVQGIAFPSGMNLWFSILSGIGWASAQIVTFKVFTMVGSSRAMPITTAFQLLGASLWGVFALGDWPGAMDKVLGGLALVGIIIGAWLTVWSEHKDAGNARTLRQAVIWLAVGEIGYWAYSAAPQATNIGGEEAFVPQAIGMVIVSIVYALFLASRGEKLALVEGVSYTHIISGFFFAFAALTYLISAQPNMNGLATGFILSQTSVVLATLTGIWFLGQKKTTKEMWVTIGGLILIIAAAAVTVTI.

Helical transmembrane passes span Ala5–Ser24, Ile34–Phe56, Asn61–Phe80, Arg90–Gly112, Val121–Val138, Gln153–Ala170, Ala182–Arg204, Val214–Ala236, Leu243–Leu265, and Trp275–Val292.

The protein belongs to the GRP transporter (TC 2.A.7.5) family.

It localises to the cell membrane. Functionally, could be involved in the uptake of ribose. This is Putative ribose uptake protein RbsU (rbsU) from Lactiplantibacillus plantarum (strain ATCC BAA-793 / NCIMB 8826 / WCFS1) (Lactobacillus plantarum).